Reading from the N-terminus, the 458-residue chain is UDP-N-acetylmuramoylalanine--D-glutamate ligase (458 aa).

124–130 (GSDGKTT) provides a ligand contact to ATP.

This sequence belongs to the MurCDEF family.

It localises to the cytoplasm. It carries out the reaction UDP-N-acetyl-alpha-D-muramoyl-L-alanine + D-glutamate + ATP = UDP-N-acetyl-alpha-D-muramoyl-L-alanyl-D-glutamate + ADP + phosphate + H(+). The protein operates within cell wall biogenesis; peptidoglycan biosynthesis. Cell wall formation. Catalyzes the addition of glutamate to the nucleotide precursor UDP-N-acetylmuramoyl-L-alanine (UMA). In Clostridium tetani (strain Massachusetts / E88), this protein is UDP-N-acetylmuramoylalanine--D-glutamate ligase.